Consider the following 938-residue polypeptide: Isoleucine--tRNA ligase (938 aa).

Residues 58–68 (PYANGNIHMGH) carry the 'HIGH' region motif. L-isoleucyl-5'-AMP is bound at residue E566. The short motif at 607–611 (KMSKS) is the 'KMSKS' region element. K610 is a binding site for ATP. Residues C906, C909, C926, and C929 each contribute to the Zn(2+) site.

It belongs to the class-I aminoacyl-tRNA synthetase family. IleS type 1 subfamily. Monomer. Zn(2+) is required as a cofactor.

The protein resides in the cytoplasm. It carries out the reaction tRNA(Ile) + L-isoleucine + ATP = L-isoleucyl-tRNA(Ile) + AMP + diphosphate. Its function is as follows. Catalyzes the attachment of isoleucine to tRNA(Ile). As IleRS can inadvertently accommodate and process structurally similar amino acids such as valine, to avoid such errors it has two additional distinct tRNA(Ile)-dependent editing activities. One activity is designated as 'pretransfer' editing and involves the hydrolysis of activated Val-AMP. The other activity is designated 'posttransfer' editing and involves deacylation of mischarged Val-tRNA(Ile). The sequence is that of Isoleucine--tRNA ligase from Nitratidesulfovibrio vulgaris (strain DP4) (Desulfovibrio vulgaris).